We begin with the raw amino-acid sequence, 500 residues long: Chromosomal replication initiator protein DnaA (500 aa).

The segment at 1–81 is domain I, interacts with DnaA modulators; sequence MVNASGDPVI…LQALRTVTGE (81 aa). The domain II stretch occupies residues 81–155; that stretch reads ENMFPAFKVV…QQKMNRDPET (75 aa). Residues 156-377 form a domain III, AAA+ region region; the sequence is HLNKNFTFDS…GALTRVTAVA (222 aa). The ATP site is built by glycine 200, glycine 202, lysine 203, and threonine 204. Residues 378–500 are domain IV, binds dsDNA; the sequence is SLSNQPVTRA…TVRLKQSNTN (123 aa).

It belongs to the DnaA family. As to quaternary structure, oligomerizes as a right-handed, spiral filament on DNA at oriC.

It localises to the cytoplasm. Functionally, plays an essential role in the initiation and regulation of chromosomal replication. ATP-DnaA binds to the origin of replication (oriC) to initiate formation of the DNA replication initiation complex once per cell cycle. Binds the DnaA box (a 9 base pair repeat at the origin) and separates the double-stranded (ds)DNA. Forms a right-handed helical filament on oriC DNA; dsDNA binds to the exterior of the filament while single-stranded (ss)DNA is stabiized in the filament's interior. The ATP-DnaA-oriC complex binds and stabilizes one strand of the AT-rich DNA unwinding element (DUE), permitting loading of DNA polymerase. After initiation quickly degrades to an ADP-DnaA complex that is not apt for DNA replication. Binds acidic phospholipids. This Bifidobacterium longum subsp. infantis (strain ATCC 15697 / DSM 20088 / JCM 1222 / NCTC 11817 / S12) protein is Chromosomal replication initiator protein DnaA.